Reading from the N-terminus, the 368-residue chain is Zinc finger protein 24 (368 aa).

A Glycyl lysine isopeptide (Lys-Gly) (interchain with G-Cter in SUMO2) cross-link involves residue K22. Residue K27 forms a Glycyl lysine isopeptide (Lys-Gly) (interchain with G-Cter in SUMO1); alternate linkage. K27 participates in a covalent cross-link: Glycyl lysine isopeptide (Lys-Gly) (interchain with G-Cter in SUMO2); alternate. An SCAN box domain is found at R52–L134. Phosphoserine is present on residues S132 and S142. Glycyl lysine isopeptide (Lys-Gly) (interchain with G-Cter in SUMO2) cross-links involve residues K147, K177, and K236. The segment at H251–H273 adopts a C2H2-type 1 zinc-finger fold. A necessary and sufficient for nuclear localization region spans residues H251 to H301. S274 is modified (phosphoserine). Glycyl lysine isopeptide (Lys-Gly) (interchain with G-Cter in SUMO2) cross-links involve residues K277 and K286. C2H2-type zinc fingers lie at residues Y279–H301, Y307–H329, and Y335–H357. S292 carries the post-translational modification Phosphoserine. Y335 is subject to Phosphotyrosine. Residues K361 and K367 each participate in a glycyl lysine isopeptide (Lys-Gly) (interchain with G-Cter in SUMO2) cross-link.

This sequence belongs to the krueppel C2H2-type zinc-finger protein family. Sumoylated.

The protein localises to the nucleus. Functionally, transcription factor required for myelination of differentiated oligodendrocytes. Required for the conversion of oligodendrocytes from the premyelinating to the myelinating state. In the developing central nervous system (CNS), involved in the maintenance in the progenitor stage by promoting the cell cycle. Specifically binds to the 5'-TCAT-3' DNA sequence. Has transcription repressor activity in vitro. This Pan troglodytes (Chimpanzee) protein is Zinc finger protein 24 (ZNF24).